We begin with the raw amino-acid sequence, 587 residues long: Large T antigen (587 aa).

A J domain is found at 6–82 (RLTELLCLPV…PEESGYATFE (77 aa)). The disordered stretch occupies residues 58 to 78 (EGLRADETLEDSDPEPEESGY). Acidic residues predominate over residues 65–75 (TLEDSDPEPEE). A DNA-binding region (T-ag OBD) is located at residues 102-219 (CMQTYFSVNE…EECSIDMNVV (118 aa)). The T-ag D1-type zinc-finger motif lies at 221-319 (EKQFMHAMLY…KRFRSATMTR (99 aa)). Cysteine 258, cysteine 261, histidine 275, and histidine 279 together coordinate Zn(2+). Positions 360–520 (PDVDVIVDIL…KVYAKALRNN (161 aa)) constitute an SF3 helicase domain. 386–393 (GPVNTGKT) contacts ATP.

Forms homohexamers in the presence of ATP. Interacts with host HDAC1. Interacts (via LXCXE domain) with host RB1; the interaction induces the aberrant dissociation of RB1-E2F1 complex thereby disrupting RB1's activity. Interacts (via LXCXE domain) with host pRB-related proteins RBL1 and RBL2. Interacts (via C-terminus) with host TOP1 and POLA1 allowing DNA replication. Interacts with host TP53, inhibiting TP53 binding to DNA. Interacts with host preinitiation complex components TBP, TFIIA and TFIID to regulate transcription initiation. Mg(2+) is required as a cofactor. In terms of processing, phosphorylated on both serine and threonine residues. Small t antigen inhibits the dephosphorylation by the AC form of PP2A. O-Glycosylated near the C-terminal region. Post-translationally, acetylated by CBP in a TP53-dependent manner.

It localises to the host nucleus. It catalyses the reaction Couples ATP hydrolysis with the unwinding of duplex DNA by translocating in the 3'-5' direction.. The enzyme catalyses ATP + H2O = ADP + phosphate + H(+). Isoform large T antigen is a key early protein essential for both driving viral replication and inducing cellular transformation. Plays a role in viral genome replication by driving entry of quiescent cells into the cell cycle and by autoregulating the synthesis of viral early mRNA. Displays highly oncogenic activities by corrupting the host cellular checkpoint mechanisms that guard cell division and the transcription, replication, and repair of DNA. Participates in the modulation of cellular gene expression preceeding viral DNA replication. This step involves binding to host key cell cycle regulators retinoblastoma protein RB1/pRb and TP53. Induces the disassembly of host E2F1 transcription factors from RB1, thus promoting transcriptional activation of E2F1-regulated S-phase genes. Inhibits host TP53 binding to DNA, abrogating the ability of TP53 to stimulate gene expression. Plays the role of a TFIID-associated factor (TAF) in transcription initiation for all three RNA polymerases, by stabilizing the TBP-TFIIA complex on promoters. Initiates viral DNA replication and unwinding via interactions with the viral origin of replication. Binds two adjacent sites in the SV40 origin. The replication fork movement is facilitated by Large T antigen helicase activity. Has processive 3'-5' DNA helicase activity which requires a short 3' single-stranded region and ATP. Activates the transcription of viral late mRNA, through host TBP and TFIIA stabilization. Interferes with histone deacetylation mediated by HDAC1, leading to activation of transcription. The sequence is that of Large T antigen from Budgerigar fledgling disease virus (BFPyV).